Reading from the N-terminus, the 720-residue chain is Dedicator of cytokinesis protein 9 (720 aa).

One can recognise a DOCKER domain in the interval 186–638 (KSYASTPELR…LSDIIVPRIC (453 aa)). The interval 277 to 638 (DEEASMMEDV…LSDIIVPRIC (362 aa)) is interaction with CDC42.

This sequence belongs to the DOCK family. In terms of assembly, homodimer. Interacts preferentially with nucleotide-depleted CDC42.

The protein resides in the endomembrane system. Guanine nucleotide-exchange factor (GEF) that activates CDC42 by exchanging bound GDP for free GTP. Overexpression induces filopodia formation. This chain is Dedicator of cytokinesis protein 9 (Dock9), found in Rattus norvegicus (Rat).